The following is a 93-amino-acid chain: Molybdopterin synthase sulfur carrier subunit (93 aa).

Glycine 93 is subject to 1-thioglycine; alternate. The residue at position 93 (glycine 93) is a Glycyl adenylate; alternate.

It belongs to the MoaD family. MOCS2A subfamily. In terms of assembly, heterotetramer; composed of 2 small (MOCS2A) and 2 large (MOCS2B) subunits. C-terminal thiocarboxylation occurs in 2 steps, it is first acyl-adenylated (-COAMP) via the hesA/moeB/thiF part of UBA4, then thiocarboxylated (-COSH) via the rhodanese domain of UBA4.

It is found in the cytoplasm. It functions in the pathway cofactor biosynthesis; molybdopterin biosynthesis. Acts as a sulfur carrier required for molybdopterin biosynthesis. Component of the molybdopterin synthase complex that catalyzes the conversion of precursor Z into molybdopterin by mediating the incorporation of 2 sulfur atoms into precursor Z to generate a dithiolene group. In the complex, serves as sulfur donor by being thiocarboxylated (-COSH) at its C-terminus by UBA4. After interaction with MOCS2B, the sulfur is then transferred to precursor Z to form molybdopterin. This Mycosarcoma maydis (Corn smut fungus) protein is Molybdopterin synthase sulfur carrier subunit.